A 92-amino-acid chain; its full sequence is MSEANVNNQEKSTRKVRTGYVVSDKMQKTIVVEVEDRKQHALYGKILRSAKKVKAHDEEQIAGIGDLVRIEETRPLSKDKNYRLIEIVEKAK.

The protein belongs to the universal ribosomal protein uS17 family. As to quaternary structure, part of the 30S ribosomal subunit.

One of the primary rRNA binding proteins, it binds specifically to the 5'-end of 16S ribosomal RNA. This is Small ribosomal subunit protein uS17 from Corynebacterium glutamicum (strain ATCC 13032 / DSM 20300 / JCM 1318 / BCRC 11384 / CCUG 27702 / LMG 3730 / NBRC 12168 / NCIMB 10025 / NRRL B-2784 / 534).